The chain runs to 118 residues: Small ribosomal subunit protein uS13 (118 aa).

Positions 93–118 (RGLPVRGQRTKTNARTRKGPRKPIRK) are disordered.

It belongs to the universal ribosomal protein uS13 family. As to quaternary structure, part of the 30S ribosomal subunit. Forms a loose heterodimer with protein S19. Forms two bridges to the 50S subunit in the 70S ribosome.

Functionally, located at the top of the head of the 30S subunit, it contacts several helices of the 16S rRNA. In the 70S ribosome it contacts the 23S rRNA (bridge B1a) and protein L5 of the 50S subunit (bridge B1b), connecting the 2 subunits; these bridges are implicated in subunit movement. Contacts the tRNAs in the A and P-sites. This chain is Small ribosomal subunit protein uS13, found in Azotobacter vinelandii (strain DJ / ATCC BAA-1303).